The primary structure comprises 707 residues: 65-kDa microtubule-associated protein 3 (707 aa).

Coiled coils occupy residues 49–84 (LEVY…CSAM), 157–179 (NLSM…EKID), 269–289 (QQEY…ITEA), 354–374 (IVDA…IKEE), and 464–486 (LEEY…DQKK). The interval 495 to 574 (QEALYGSKPS…PSRKQSMNPS (80 aa)) is disordered. Residues 500–512 (GSKPSPSKPLGGK) show a composition bias toward low complexity. Residues serine 504 and serine 528 each carry the phosphoserine modification.

It belongs to the MAP65/ASE1 family. In terms of assembly, forms a dimer. Binds to microtubules (MT) during cell division. Bundles polymerized MT via the formation of 25-nm crossbridges with centrally located endocytic MT, and midline phragmoplast MT. Expressed in all tissues enriched in dividing cells, such as the root and shoot apical meristem, foliar primordia, and young leaves, and embryos.

It localises to the nucleus. Its subcellular location is the cytoplasm. The protein localises to the cytoskeleton. The protein resides in the phragmoplast. Its function is as follows. Microtubule-associated protein that plays a critical role in organizing the mitotic microtubule array during both early and late mitosis in all plant organs. Essential for the cytokinesis, especially in roots, by maintaining the integrity of the overlapped microtubules in the phragmoplast. Required during root morphogenesis. Needed for giant cell development during root knot nematode infection, where cytokinesis is initiated but not completed. The chain is 65-kDa microtubule-associated protein 3 (MAP65-3) from Arabidopsis thaliana (Mouse-ear cress).